The sequence spans 1311 residues: Ubiquitin carboxyl-terminal hydrolase 36 (1311 aa).

Low complexity-rich tracts occupy residues 120–134 (AAAATNNGNSNSAGS) and 156–174 (STPTTTTTQTSSSSTSSSS). The tract at residues 120-189 (AAAATNNGNS…NPNELPKPKR (70 aa)) is disordered. The USP domain occupies 212–533 (AGMINVGNTC…NSYIMFYELD (322 aa)). Cys-221 acts as the Nucleophile in catalysis. The active-site Proton acceptor is the His-492. The segment at 546 to 575 (NGLRQLSNGHHHHQQQQQQHQQQQQQQPTV) is disordered. Residues 560-572 (QQQQQHQQQQQQQ) show a composition bias toward low complexity. A Phosphoserine modification is found at Ser-581. Disordered regions lie at residues 587 to 620 (TRFIGPQLPPGGLNGYAMTTTTTATNNTTNGHSQ), 640 to 1095 (KFQE…GCLN), and 1136 to 1311 (DHGD…QQQS). Composition is skewed to low complexity over residues 605–616 (TTTTTATNNTTN), 660–716 (APAV…QQQQ), and 759–774 (TLTLTPTTTPTASTPT). Phosphothreonine is present on Thr-767. A phosphoserine mark is found at Ser-787 and Ser-789. A compositionally biased stretch (low complexity) spans 795 to 826 (SSGTPSSSTPTTTTTAAAAAASSPMQATAAAT). The segment covering 836–853 (ARKRSLPDHHHHHPHHHV) has biased composition (basic residues). The span at 869 to 879 (PATNFNSSSSK) shows a compositional bias: polar residues. Basic and acidic residues predominate over residues 880-889 (QKTDAIDEIF). Positions 896–905 (NKKRINNKNQ) are enriched in basic residues. Over residues 910-920 (GDEEEDDEETL) the composition is skewed to acidic residues. Low complexity-rich tracts occupy residues 925–942 (NNSSRLVSSSTNTSPTTN) and 950–979 (VSSSSSNSKNVSTSAAAAAATTSSSTSTSA). Residues 980–989 (PPSPKTPPSP) show a composition bias toward pro residues. Ser-982 is subject to Phosphoserine. The residue at position 985 (Thr-985) is a Phosphothreonine. At Ser-988 the chain carries Phosphoserine. A compositionally biased stretch (acidic residues) spans 1006-1020 (DDDDDEEEEDEDDEE). A compositionally biased stretch (low complexity) spans 1037–1050 (PFSSQQKPTPSPST). Ser-1047 is modified (phosphoserine). Residue Thr-1050 is modified to Phosphothreonine. A compositionally biased stretch (polar residues) spans 1060 to 1081 (FNGTSSSTPHVGNGYQSEPSTP). 2 stretches are compositionally biased toward low complexity: residues 1154-1176 (VVTTTTTTTTTTKNTTKTLTADA) and 1204-1221 (TANGKSSGNSNNTTPGYN). Over residues 1246 to 1255 (QHASSSYRSN) the composition is skewed to polar residues. A compositionally biased stretch (gly residues) spans 1267–1276 (GGNGGGGSGG).

This sequence belongs to the peptidase C19 family. Interacts with atms/PAF1, but not with CycT.

It is found in the nucleus. It localises to the nucleolus. It carries out the reaction Thiol-dependent hydrolysis of ester, thioester, amide, peptide and isopeptide bonds formed by the C-terminal Gly of ubiquitin (a 76-residue protein attached to proteins as an intracellular targeting signal).. Its function is as follows. Required for maintaining multiple types of adult stem cells, including male and female germline, epithelial follicle cell and intestinal stem cells. May function as a transcriptional repressor by continually deubiquiting histone H2B at the promoters of genes critical for cellular differentiation, thereby preventing histone H3 'Lys-4' trimethylation (H3K4). Controls selective autophagy activation by ubiquitinated proteins. The protein is Ubiquitin carboxyl-terminal hydrolase 36 (Usp36) of Drosophila willistoni (Fruit fly).